A 102-amino-acid chain; its full sequence is Protein translation factor SUI1 homolog (102 aa).

It belongs to the SUI1 family.

The protein is Protein translation factor SUI1 homolog of Methanococcus maripaludis (strain C5 / ATCC BAA-1333).